Reading from the N-terminus, the 291-residue chain is MDIISLKAYAKINLALDVIGKRPNGYHDVRMIMQTIKLYDKITIKPTTNPDITIKTNLHFLPTNENNIVYTACKLFKDTFQISDGFYINLEKRIPVAAGMAGGSSDAAATLFGLNELFQTNQSLEDLMKLGVKLGADVPYCLLRGTALSEGIGEVLTPLPPAPNCYCLIVKPPVSVSTKFVYENLKLDENTKHPNIDGMVEAIEKQDLHQMSSLVSNVLESVTIKHHPEIERIKMDLLSHGALNALMSGSGPTVFALFDNQKAAERAFYEYKVGPYGKQTFLTRFFESKNV.

Residue Lys-11 is part of the active site. 95–105 serves as a coordination point for ATP; sequence PVAAGMAGGSS. Residue Asp-137 is part of the active site.

Belongs to the GHMP kinase family. IspE subfamily.

It catalyses the reaction 4-CDP-2-C-methyl-D-erythritol + ATP = 4-CDP-2-C-methyl-D-erythritol 2-phosphate + ADP + H(+). Its pathway is isoprenoid biosynthesis; isopentenyl diphosphate biosynthesis via DXP pathway; isopentenyl diphosphate from 1-deoxy-D-xylulose 5-phosphate: step 3/6. Catalyzes the phosphorylation of the position 2 hydroxy group of 4-diphosphocytidyl-2C-methyl-D-erythritol. The chain is 4-diphosphocytidyl-2-C-methyl-D-erythritol kinase from Lachnoclostridium phytofermentans (strain ATCC 700394 / DSM 18823 / ISDg) (Clostridium phytofermentans).